A 455-amino-acid polypeptide reads, in one-letter code: Putative non-structural protein (455 aa).

The span at 262-276 (KERKTTHKTLVEDTH) shows a compositional bias: basic and acidic residues. Residues 262–341 (KERKTTHKTL…GVLTKKKSLK (80 aa)) are disordered.

This chain is Putative non-structural protein, found in Bombyx mori (Silk moth).